Reading from the N-terminus, the 118-residue chain is Small ribosomal subunit protein uS13 (118 aa).

Residues 94–118 (SLPLRGQRTKTNARTRKGPRKPIRK) are disordered.

Belongs to the universal ribosomal protein uS13 family. Part of the 30S ribosomal subunit. Forms a loose heterodimer with protein S19. Forms two bridges to the 50S subunit in the 70S ribosome.

Located at the top of the head of the 30S subunit, it contacts several helices of the 16S rRNA. In the 70S ribosome it contacts the 23S rRNA (bridge B1a) and protein L5 of the 50S subunit (bridge B1b), connecting the 2 subunits; these bridges are implicated in subunit movement. Contacts the tRNAs in the A and P-sites. This Shewanella sp. (strain W3-18-1) protein is Small ribosomal subunit protein uS13.